The following is a 348-amino-acid chain: UPF0283 membrane protein PBPRA2435 (348 aa).

The next 3 helical transmembrane spans lie at 71 to 91 (GLLI…VVSA), 97 to 117 (WLAL…ITAL), and 211 to 231 (EAAV…LVAW).

This sequence belongs to the UPF0283 family.

It is found in the cell inner membrane. This chain is UPF0283 membrane protein PBPRA2435, found in Photobacterium profundum (strain SS9).